We begin with the raw amino-acid sequence, 410 residues long: Arginine deiminase (410 aa).

Cys400 serves as the catalytic Amidino-cysteine intermediate.

The protein belongs to the arginine deiminase family.

The protein resides in the cytoplasm. It catalyses the reaction L-arginine + H2O = L-citrulline + NH4(+). It functions in the pathway amino-acid degradation; L-arginine degradation via ADI pathway; carbamoyl phosphate from L-arginine: step 1/2. The chain is Arginine deiminase from Bacillus cereus (strain ATCC 10987 / NRS 248).